The chain runs to 142 residues: Large ribosomal subunit protein uL11 (142 aa).

The protein belongs to the universal ribosomal protein uL11 family. Part of the ribosomal stalk of the 50S ribosomal subunit. Interacts with L10 and the large rRNA to form the base of the stalk. L10 forms an elongated spine to which L12 dimers bind in a sequential fashion forming a multimeric L10(L12)X complex. One or more lysine residues are methylated.

In terms of biological role, forms part of the ribosomal stalk which helps the ribosome interact with GTP-bound translation factors. This chain is Large ribosomal subunit protein uL11, found in Shewanella pealeana (strain ATCC 700345 / ANG-SQ1).